The chain runs to 198 residues: DNA damage response protein D (198 aa).

Residues 124 to 198 (SAAPTDPAGP…SEAGENTPAA (75 aa)) form a disordered region. Over residues 136–180 (PGTDRAERTAAERTASERATHDRASTERPARPRRSAEPEAVRTED) the composition is skewed to basic and acidic residues.

Functionally, appears to contribute to D.radiodurans capacity to survive exposure to ionizing radiation. May play a role in DNA repair and genome reconstitution. This Deinococcus radiodurans (strain ATCC 13939 / DSM 20539 / JCM 16871 / CCUG 27074 / LMG 4051 / NBRC 15346 / NCIMB 9279 / VKM B-1422 / R1) protein is DNA damage response protein D (ddrD).